The following is a 369-amino-acid chain: Biglycan (369 aa).

The signal sequence occupies residues 1–16 (MCPLWLLAALLALSQA). The propeptide occupies 17-37 (LPFEQKAFWDFTLDDGLPMLN). O-linked (Xyl...) (glycosaminoglycan) serine glycans are attached at residues serine 42 and serine 48. 2 disulfides stabilise this stretch: cysteine 64-cysteine 70 and cysteine 68-cysteine 77. 12 LRR repeats span residues 83 to 103 (KAVPKEISPDTTLLDLQNNDI), 104 to 127 (SELRKDDFKGLQHLYALVLVNNKI), 128 to 151 (SKIHEKAFSPLRKLQKLYISKNHL), 152 to 172 (VEIPPNLPSSLVELRIHDNRI), 173 to 196 (RKVPKGVFSGLRNMNCIEMGGNPL), 197 to 221 (ENSGFEPGAFDGLKLNYLRISEAKL), 222 to 242 (TGIPKDLPETLNELHLDHNKI), 243 to 266 (QAIELEDLLRYSKLYRLGLGHNQI), 267 to 290 (RMIENGSLSFLPTLRELHLDNNKL), 291 to 313 (SRVPAGLPDLKLLQVVYLHTNNI), 314 to 343 (TKVGVNDFCPVGFGVKRAYYNGISLFNNPV), and 344 to 369 (PYWEVQPATFRCVTDRLAIQFGNYKK). N-linked (GlcNAc...) asparagine glycosylation is found at asparagine 271 and asparagine 312. Cysteines 322 and 355 form a disulfide.

The protein belongs to the small leucine-rich proteoglycan (SLRP) family. SLRP class I subfamily. As to quaternary structure, homodimer. Forms a ternary complex with MFAP2 and ELN. The two attached glycosaminoglycan chains can be either chondroitin sulfate or dermatan sulfate. Found in several connective tissues, especially in articular cartilages.

It localises to the secreted. Its subcellular location is the extracellular space. The protein resides in the extracellular matrix. May be involved in collagen fiber assembly. This Ovis aries (Sheep) protein is Biglycan (BGN).